The chain runs to 102 residues: Small ribosomal subunit protein uS10 (102 aa).

It belongs to the universal ribosomal protein uS10 family. In terms of assembly, part of the 30S ribosomal subunit.

In terms of biological role, involved in the binding of tRNA to the ribosomes. This chain is Small ribosomal subunit protein uS10, found in Enterococcus faecalis (strain ATCC 700802 / V583).